A 155-amino-acid polypeptide reads, in one-letter code: Large ribosomal subunit protein uL22 (155 aa).

It belongs to the universal ribosomal protein uL22 family. In terms of assembly, part of the 50S ribosomal subunit.

In terms of biological role, this protein binds specifically to 23S rRNA. It makes multiple contacts with different domains of the 23S rRNA in the assembled 50S subunit and ribosome. The globular domain of the protein is located near the polypeptide exit tunnel on the outside of the subunit, while an extended beta-hairpin is found that lines the wall of the exit tunnel in the center of the 70S ribosome. In Archaeoglobus fulgidus (strain ATCC 49558 / DSM 4304 / JCM 9628 / NBRC 100126 / VC-16), this protein is Large ribosomal subunit protein uL22.